Reading from the N-terminus, the 141-residue chain is Ly6/PLAUR domain-containing protein 1 (141 aa).

The N-terminal stretch at 1 to 20 is a signal peptide; it reads MWVLGIAATFCGLFWLPGLA. 6 disulfide bridges follow: Cys-25/Cys-54, Cys-28/Cys-37, Cys-46/Cys-71, Cys-77/Cys-100, Cys-88/Cys-97, and Cys-101/Cys-106. The UPAR/Ly6 domain occupies 25-107; that stretch reads CYQCEEFQLN…ISCCNTPLCN (83 aa). Residue Asn-45 is glycosylated (N-linked (GlcNAc...) asparagine). Residue Gly-115 is the site of GPI-anchor amidated glycine attachment. Positions 116 to 141 are cleaved as a propeptide — removed in mature form; that stretch reads SSASAIRPGLLTTLLFFHLALCLAHC.

As to quaternary structure, interacts with CHRNA4 and nAChRs containing alpha-4:beta-2 (CHRNA4:CHRNB2) and alpha-7 (CHRNA7) subunits. As to expression, preferentially expressed in the nervous system. Expressed in embryonic and postnatal postmitotic central and peripheral neurons including subpopulations of motor neurons, sensory neurons, interneurons and neurons of the autonomous nervous system. Expressed around the growing nerves in the limb bud. Expressed at high levels in specific brain regions such as the prefrontal cortex, amygdala, hippocampus, mediodorsal thalamus, dentate gyrus and specific brainstem nuclei (at protein level).

It is found in the cell membrane. In terms of biological role, believed to act as a modulator of nicotinic acetylcholine receptors (nAChRs) activity. In vitro increases receptor desensitization and decreases affinity for ACh of alpha-4:beta-2-containing nAChRs. May play a role in the intracellular trafficking of alpha-4:beta-2 and alpha-7-containing nAChRs and may inhibit their expression at the cell surface. May be involved in the control of anxiety. The sequence is that of Ly6/PLAUR domain-containing protein 1 (Lypd1) from Mus musculus (Mouse).